The sequence spans 778 residues: Probable dipeptidyl peptidase 4 (778 aa).

Residues 1–18 (MKTSQFLSLLLLAGIAQA) form the signal peptide. N-linked (GlcNAc...) asparagine glycans are attached at residues Asn-84, Asn-114, and Asn-222. Residues Ser-616, Asp-693, and His-728 each act as charge relay system in the active site.

It belongs to the peptidase S9B family.

The protein resides in the secreted. The enzyme catalyses Release of an N-terminal dipeptide, Xaa-Yaa-|-Zaa-, from a polypeptide, preferentially when Yaa is Pro, provided Zaa is neither Pro nor hydroxyproline.. Functionally, extracellular dipeptidyl-peptidase which removes N-terminal dipeptides sequentially from polypeptides having unsubstituted N-termini provided that the penultimate residue is proline. Contributes to pathogenicity. In Arthroderma benhamiae (strain ATCC MYA-4681 / CBS 112371) (Trichophyton mentagrophytes), this protein is Probable dipeptidyl peptidase 4 (DPP4).